The chain runs to 345 residues: MMFAYLPPDLESEILSRVPATFLKELQTTCKRWYALFRDPIFVKKNLGKAATHVIFNNLGDYSVTEMNTLVHSINLRGIQNSFDPSIGVERKLYELNDPEHDKILGIISHCDGLLLCATKDKTRLVVWNPCTGQTRWIQIKNVFKNNPQLILLVIKFKIYEFNSDSWRILDDISPVCFIRSNGVNLKGNAYFVASDKESKFILKFDFTTERFLRLSFPSQNDDQIAVLSVVRQEKLALLQQRFDTSSIKMNIWVTKTKIDADKDLSWSNFLVVDFGKVTLTSEPLSFLVDEENKMVVCSSKIRHIERKTIIYFAKEGIQVHQEIAQKPKGCCSFLVSYVPSLVQF.

Residues 1-46 (MMFAYLPPDLESEILSRVPATFLKELQTTCKRWYALFRDPIFVKKN) enclose the F-box domain.

The protein is Putative F-box protein At3g17265 of Arabidopsis thaliana (Mouse-ear cress).